Here is a 316-residue protein sequence, read N- to C-terminus: Probable cell division protein WhiA (316 aa).

A DNA-binding region (H-T-H motif) is located at residues Thr275–Ala309.

The protein belongs to the WhiA family.

Its function is as follows. Involved in cell division and chromosome segregation. This is Probable cell division protein WhiA from Bacillus mycoides (strain KBAB4) (Bacillus weihenstephanensis).